The primary structure comprises 462 residues: 3-ketoacyl-CoA thiolase 2, peroxisomal (462 aa).

A peroxisome-targeting transit peptide spans 1–34 (MEKAIERQRVLLEHLRPSSSSSHNYEASLSASAC). Residue Cys138 is the Acyl-thioester intermediate of the active site. The cysteines at positions 138 and 192 are disulfide-linked. Catalysis depends on proton acceptor residues His393 and Cys425.

It belongs to the thiolase-like superfamily. Thiolase family. Forms homodimers. In terms of tissue distribution, accumulates in etiolated cotyledons and in seedlings, also present in roots, flowers and siliques (at protein level). High levels in wounded leaves.

The protein resides in the peroxisome. The protein localises to the glyoxysome. It carries out the reaction an acyl-CoA + acetyl-CoA = a 3-oxoacyl-CoA + CoA. Its pathway is lipid metabolism; fatty acid metabolism. In terms of biological role, involved in long chain fatty-acid beta-oxidation prior to gluconeogenesis during germination and subsequent seedling growth. Confers sensitivity to 2,4-dichlorophenoxybutiric acid (2,4-DB). Required for local and systemic induction of jasmonic acid (JA) biosynthesis after wounding. Seems to be involved in JA biosynthesis during senescence. May be involved in the positive regulation of abscisic acid-activated signaling pathway. The protein is 3-ketoacyl-CoA thiolase 2, peroxisomal (PED1) of Arabidopsis thaliana (Mouse-ear cress).